We begin with the raw amino-acid sequence, 312 residues long: Tetraacyldisaccharide 4'-kinase (312 aa).

60 to 67 is an ATP binding site; sequence IAGGSGKT.

This sequence belongs to the LpxK family.

It catalyses the reaction a lipid A disaccharide + ATP = a lipid IVA + ADP + H(+). It participates in glycolipid biosynthesis; lipid IV(A) biosynthesis; lipid IV(A) from (3R)-3-hydroxytetradecanoyl-[acyl-carrier-protein] and UDP-N-acetyl-alpha-D-glucosamine: step 6/6. Its function is as follows. Transfers the gamma-phosphate of ATP to the 4'-position of a tetraacyldisaccharide 1-phosphate intermediate (termed DS-1-P) to form tetraacyldisaccharide 1,4'-bis-phosphate (lipid IVA). In Helicobacter pylori (strain HPAG1), this protein is Tetraacyldisaccharide 4'-kinase.